The chain runs to 3526 residues: WD repeat and FYVE domain-containing protein 3 (3526 aa).

A phosphoserine mark is found at serine 1942 and serine 2278. A sufficient for localization to p62 bodies/ALIS region spans residues leucine 2285–arginine 2981. Disordered stretches follow at residues glutamate 2403–tyrosine 2429 and serine 2459–aspartate 2522. Residues glutamate 2468–alanine 2477 are compositionally biased toward basic and acidic residues. Serine 2492 bears the Phosphoserine mark. The BEACH-type PH domain maps to glutamate 2531 to leucine 2656. The interaction with SQSTM1 stretch occupies residues methionine 2586–cysteine 3526. One can recognise a BEACH domain in the interval glycine 2683–lysine 2976. Residues arginine 2981–cysteine 3526 form an interaction with ATG5 region. WD repeat units lie at residues serine 3077–lysine 3115, glycine 3125–glutamine 3164, glycine 3167–asparagine 3206, and glycine 3210–threonine 3254. The interval alanine 3272 to serine 3335 is disordered. Residues alanine 3278–glutamate 3290 are compositionally biased toward acidic residues. The interaction with GABARAP stretch occupies residues alanine 3313–proline 3363. Serine 3335 and serine 3339 each carry phosphoserine. Residues phenylalanine 3346 to valine 3349 carry the LC3-interacting region (LIR) motif. The WD 5 repeat unit spans residues alanine 3408–alanine 3447. Residues aspartate 3454–glutamine 3514 form an FYVE-type zinc finger. Residues cysteine 3460, cysteine 3463, cysteine 3476, cysteine 3479, cysteine 3484, cysteine 3487, cysteine 3506, and cysteine 3509 each coordinate Zn(2+).

Directly interacts with ATG5 and associates with the ATG12-ATG5-ATG16L complex. Interacts with p62/SQSTM1; this interaction is required to recruit WDFY3 to cytoplasmic bodies and to PML bodies. Directly interacts with GABARAP, GABARAPL1 and GABARAPL2; the interaction with GABARAP is required for WDFY3 recruitment to MAP1LC3B-positive p62/SQSTM1 bodies. Weakly interacts with MAP1LC3C; this interaction is direct. Does not interact with MAP1LC3A, nor MAP1LC3B. Interacts with TRAF6. Expressed in osteoclast and their mononuclear precursors (at protein level).

It is found in the nucleus membrane. Its subcellular location is the cytoplasm. The protein resides in the cytosol. The protein localises to the nucleus. It localises to the PML body. It is found in the membrane. Its subcellular location is the perikaryon. The protein resides in the cell projection. The protein localises to the axon. In terms of biological role, required for selective macroautophagy (aggrephagy). Acts as an adapter protein by linking specific proteins destined for degradation to the core autophagic machinery members, such as the ATG5-ATG12-ATG16L E3-like ligase, SQSTM1 and LC3. Along with p62/SQSTM1, involved in the formation and autophagic degradation of cytoplasmic ubiquitin-containing inclusions (p62 bodies, ALIS/aggresome-like induced structures). Along with SQSTM1, required to recruit ubiquitinated proteins to PML bodies in the nucleus. Important for normal brain development. Essential for the formation of axonal tracts throughout the brain and spinal cord, including the formation of the major forebrain commissures. Involved in the ability of neural cells to respond to guidance cues. Required for cortical neurons to respond to the trophic effects of netrin-1/NTN1. Regulates Wnt signaling through the removal of DVL3 aggregates, likely in an autophagy-dependent manner. This process may be important for the determination of brain size during embryonic development. May regulate osteoclastogenesis by acting on the TNFSF11/RANKL - TRAF6 pathway. After cytokinetic abscission, involved in midbody remnant degradation. In vitro strongly binds to phosphatidylinositol 3-phosphate (PtdIns3P). In Homo sapiens (Human), this protein is WD repeat and FYVE domain-containing protein 3 (WDFY3).